Reading from the N-terminus, the 364-residue chain is Anthranilate phosphoribosyltransferase (364 aa).

5-phospho-alpha-D-ribose 1-diphosphate-binding positions include Gly101, 104–105 (GD), Thr109, 111–114 (NLST), 129–137 (KHGNRAASS), and Gly141. Gly101 lines the anthranilate pocket. Ser113 is a Mg(2+) binding site. Position 132 (Asn132) interacts with anthranilate. Arg187 contacts anthranilate. Mg(2+) is bound by residues Asp245 and Glu246.

The protein belongs to the anthranilate phosphoribosyltransferase family. In terms of assembly, homodimer. It depends on Mg(2+) as a cofactor.

The catalysed reaction is N-(5-phospho-beta-D-ribosyl)anthranilate + diphosphate = 5-phospho-alpha-D-ribose 1-diphosphate + anthranilate. It participates in amino-acid biosynthesis; L-tryptophan biosynthesis; L-tryptophan from chorismate: step 2/5. Catalyzes the transfer of the phosphoribosyl group of 5-phosphorylribose-1-pyrophosphate (PRPP) to anthranilate to yield N-(5'-phosphoribosyl)-anthranilate (PRA). This Mycolicibacterium gilvum (strain PYR-GCK) (Mycobacterium gilvum (strain PYR-GCK)) protein is Anthranilate phosphoribosyltransferase.